The chain runs to 484 residues: UDP-glycosyltransferase 73B4 (484 aa).

The active-site Proton acceptor is the His18. 2 residues coordinate an anthocyanidin: His18 and Asn89. The active-site Charge relay is the Asp129. Residues Ala356, Gln358, His373, Trp376, Asn377, Ser378, and Glu381 each coordinate UDP-alpha-D-glucose. Ala396 contacts an anthocyanidin. UDP-alpha-D-glucose is bound by residues Glu397 and Gln398.

This sequence belongs to the UDP-glycosyltransferase family. As to expression, specifically expressed in roots.

It catalyses the reaction a flavonol + UDP-alpha-D-glucose = a flavonol 3-O-beta-D-glucoside + UDP + H(+). Possesses quercetin 3-O-glucosyltransferase and low 7-O-glucosyltransferase activities in vitro. Also active in vitro on benzoates and benzoate derivatives. Can detoxify the explosive 2,4,6-trinitrotoluene in plant by forming O- or C-glucose conjugates. This chain is UDP-glycosyltransferase 73B4 (UGT73B4), found in Arabidopsis thaliana (Mouse-ear cress).